The primary structure comprises 272 residues: uncharacterized protein (272 aa).

The signal sequence occupies residues 1 to 20 (MKLRKIFLLPLISLSTLSVA). Cys21 is lipidated: N-palmitoyl cysteine. A lipid anchor (S-diacylglycerol cysteine) is attached at Cys21.

Belongs to the MG439/MG440 family.

Its subcellular location is the cell membrane. This is an uncharacterized protein from Mycoplasma genitalium (strain ATCC 33530 / DSM 19775 / NCTC 10195 / G37) (Mycoplasmoides genitalium).